A 450-amino-acid polypeptide reads, in one-letter code: tRNA modification GTPase MnmE (450 aa).

(6S)-5-formyl-5,6,7,8-tetrahydrofolate is bound by residues K21, E78, and K117. One can recognise a TrmE-type G domain in the interval 213–376; that stretch reads GHALSIVGKP…LSQKISAFFP (164 aa). N223 lines the K(+) pocket. GTP is bound by residues 223–228, 242–248, and 267–270; these read NAGKSS, SDIKGTT, and DTAG. Position 227 (S227) interacts with Mg(2+). 3 residues coordinate K(+): S242, I244, and T247. Mg(2+) is bound at residue T248. (6S)-5-formyl-5,6,7,8-tetrahydrofolate is bound at residue K450.

This sequence belongs to the TRAFAC class TrmE-Era-EngA-EngB-Septin-like GTPase superfamily. TrmE GTPase family. In terms of assembly, homodimer. Heterotetramer of two MnmE and two MnmG subunits. K(+) serves as cofactor.

It is found in the cytoplasm. Functionally, exhibits a very high intrinsic GTPase hydrolysis rate. Involved in the addition of a carboxymethylaminomethyl (cmnm) group at the wobble position (U34) of certain tRNAs, forming tRNA-cmnm(5)s(2)U34. The chain is tRNA modification GTPase MnmE from Helicobacter pylori (strain Shi470).